The sequence spans 155 residues: Large ribosomal subunit protein eL24 (155 aa).

The tract at residues 92–155 (AKRNMKPEVR…KAAPRVGGKR (64 aa)) is disordered. The segment covering 96-117 (MKPEVRKAQREQAIKQAKEQKK) has biased composition (basic and acidic residues). Positions 124-133 (KTTAPPTKGK) are enriched in low complexity.

The protein belongs to the eukaryotic ribosomal protein eL24 family.

The polypeptide is Large ribosomal subunit protein eL24 (RpL24) (Plutella xylostella (Diamondback moth)).